A 359-amino-acid polypeptide reads, in one-letter code: Protein Wnt-2 (359 aa).

An N-terminal signal peptide occupies residues 1–25; the sequence is MNAPLAGIWPWLPLLWAWLVPEVSS. Disulfide bonds link Cys75/Cys86, Cys126/Cys134, Cys136/Cys156, Cys205/Cys219, Cys207/Cys214, Cys277/Cys308, Cys293/Cys303, Cys307/Cys347, Cys323/Cys338, Cys325/Cys335, and Cys330/Cys331. Ser211 is lipidated: O-palmitoleoyl serine; by PORCN. The N-linked (GlcNAc...) asparagine glycan is linked to Asn294.

This sequence belongs to the Wnt family. In terms of processing, palmitoleoylation is required for efficient binding to frizzled receptors. Depalmitoleoylation leads to Wnt signaling pathway inhibition.

The protein resides in the secreted. Its subcellular location is the extracellular space. It localises to the extracellular matrix. Its function is as follows. Ligand for members of the frizzled family of seven transmembrane receptors. Probable developmental protein. May be a signaling molecule which affects the development of discrete regions of tissues. Is likely to signal over only few cell diameters. This is Protein Wnt-2 (WNT2) from Echinops telfairi (Lesser hedgehog tenrec).